Consider the following 229-residue polypeptide: Galactonate operon transcriptional repressor (229 aa).

Residues 1-71 (MTLNKTDRIV…RYRGAFVAPR (71 aa)) enclose the HTH gntR-type domain. A DNA-binding region (H-T-H motif) is located at residues 31–50 (EAELCEEFATSRNIIREVFR). Aspartate 146, histidine 150, and histidine 195 together coordinate Zn(2+).

As to quaternary structure, homodimer.

D-galactonate binds DgoR and induces a conformational change in the protein, which decreases its affinity for DNA and consequently derepresses transcription of the dgoRKADT operon. Its function is as follows. Involved in the regulation of D-galactonate metabolism. Represses the expression of the dgoRKADT operon by binding to two closely spaced inverted repeats in the cis-acting element, which overlap with the D-galactonate responsive dgo promoter. Employs a derepression mechanism using D-galactonate as a specific effector molecule. The sequence is that of Galactonate operon transcriptional repressor from Escherichia coli (strain K12).